A 277-amino-acid chain; its full sequence is Raffinose operon transcriptional regulatory protein RafR (277 aa).

The region spanning 176–274 is the HTH araC/xylS-type domain; that stretch reads NLAVSYLQEN…GASPSYYRKS (99 aa). 2 DNA-binding regions (H-T-H motif) span residues 193–214 and 241–264; these read MDLC…KTHA and VQSI…KRYS.

Involved in the regulation of the raffinose-operon. This Pediococcus pentosaceus protein is Raffinose operon transcriptional regulatory protein RafR (rafR).